We begin with the raw amino-acid sequence, 174 residues long: Gamma-crystallin F (174 aa).

Beta/gamma crystallin 'Greek key' domains are found at residues 2–40 and 41–83; these read GKIT…RVDS and GCWM…RLIP. The interval 84 to 87 is connecting peptide; the sequence is HTGS. 2 Beta/gamma crystallin 'Greek key' domains span residues 88–128 and 129–171; these read HRLR…NVLE and GWWV…RRAV.

It belongs to the beta/gamma-crystallin family.

In terms of biological role, crystallins are the dominant structural components of the vertebrate eye lens. In Bos taurus (Bovine), this protein is Gamma-crystallin F (CRYGF).